A 185-amino-acid polypeptide reads, in one-letter code: Threonylcarbamoyl-AMP synthase (185 aa).

The 182-residue stretch at 4 to 185 folds into the YrdC-like domain; the sequence is SWRVQQAARE…LATGEVVRPG (182 aa).

It belongs to the SUA5 family. TsaC subfamily.

The protein localises to the cytoplasm. It carries out the reaction L-threonine + hydrogencarbonate + ATP = L-threonylcarbamoyladenylate + diphosphate + H2O. Functionally, required for the formation of a threonylcarbamoyl group on adenosine at position 37 (t(6)A37) in tRNAs that read codons beginning with adenine. Catalyzes the conversion of L-threonine, HCO(3)(-)/CO(2) and ATP to give threonylcarbamoyl-AMP (TC-AMP) as the acyladenylate intermediate, with the release of diphosphate. In Pseudomonas entomophila (strain L48), this protein is Threonylcarbamoyl-AMP synthase.